Here is a 984-residue protein sequence, read N- to C-terminus: Respiratory nitrate reductase subunit alpha (984 aa).

The interval 1 to 43 (MSRNDASQLDDGETTAESPPDDQANDAPEVGDPPGDPVDADSG) is disordered. Positions 8–24 (QLDDGETTAESPPDDQA) are enriched in acidic residues. In terms of domain architecture, 4Fe-4S Mo/W bis-MGD-type spans 103–167 (DSVSRSTHSV…CYTDYVNADQ (65 aa)). Residues histidine 110, cysteine 114, cysteine 118, and cysteine 153 each coordinate [4Fe-4S] cluster. A Mo-bis(molybdopterin guanine dinucleotide)-binding site is contributed by aspartate 249.

It belongs to the prokaryotic molybdopterin-containing oxidoreductase family. As to quaternary structure, probable multiprotein complex; a catalytic heterodimer of an alpha and beta chain is proposed to associate with additional subunits involved in membrane attachment and electron transfer. It depends on [4Fe-4S] cluster as a cofactor. Mo-bis(molybdopterin guanine dinucleotide) serves as cofactor. Post-translationally, exported by the Tat system.

Its subcellular location is the cell membrane. The enzyme catalyses nitrate + a quinol = a quinone + nitrite + H2O. With respect to regulation, inhibited by cyanide, azide and antimycin A. Enzyme stability is not dependent on salt concentration. Its function is as follows. The respiratory membrane-bound nitrate reductase enzyme complex plays a role in generation of metabolic energy by using nitrate as a terminal electron acceptor during anaerobic conditions. The alpha chain is the actual site of nitrate reduction. This chain is Respiratory nitrate reductase subunit alpha (narG), found in Haloferax mediterranei (strain ATCC 33500 / DSM 1411 / JCM 8866 / NBRC 14739 / NCIMB 2177 / R-4) (Halobacterium mediterranei).